The following is a 201-amino-acid chain: ADP-ribosylation factor-like protein 4D (201 aa).

Residue glycine 2 is the site of N-myristoyl glycine attachment. Residues 28–35 (GLDSAGKT), 76–80 (DVGGQ), and 135–138 (NKQD) contribute to the GTP site.

Belongs to the small GTPase superfamily. Arf family. As to quaternary structure, interacts with CYTH2; the interaction is direct and ARL4D GTP-dependent. Does not interact with ARL4D.

The protein resides in the nucleus. Its subcellular location is the nucleolus. The protein localises to the cell membrane. It is found in the cytoplasm. Small GTP-binding protein which cycles between an inactive GDP-bound and an active GTP-bound form, and the rate of cycling is regulated by guanine nucleotide exchange factors (GEF) and GTPase-activating proteins (GAP). GTP-binding protein that does not act as an allosteric activator of the cholera toxin catalytic subunit. Recruits CYTH1, CYTH2, CYTH3 and CYTH4 to the plasma membrane in GDP-bound form. In Homo sapiens (Human), this protein is ADP-ribosylation factor-like protein 4D (ARL4D).